A 309-amino-acid polypeptide reads, in one-letter code: Foldase protein PrsA 2 (309 aa).

Positions 1–22 (MKQMNKLITGVVTLATVVTLSA) are cleaved as a signal peptide. Cys-23 carries the N-palmitoyl cysteine lipid modification. A lipid anchor (S-diacylglycerol cysteine) is attached at Cys-23. Positions 146–241 (TPTMTAEIMQ…RTYHIIKVTK (96 aa)) constitute a PpiC domain.

This sequence belongs to the PrsA family.

The protein localises to the cell membrane. The catalysed reaction is [protein]-peptidylproline (omega=180) = [protein]-peptidylproline (omega=0). Functionally, plays a major role in protein secretion by helping the post-translocational extracellular folding of several secreted proteins. The protein is Foldase protein PrsA 2 (prsA2) of Streptococcus pyogenes serotype M1.